The sequence spans 262 residues: ATP synthase subunit delta (262 aa).

The protein belongs to the ATPase delta chain family. In terms of assembly, F-type ATPases have 2 components, F(1) - the catalytic core - and F(0) - the membrane proton channel. F(1) has five subunits: alpha(3), beta(3), gamma(1), delta(1), epsilon(1). F(0) has three main subunits: a(1), b(2) and c(10-14). The alpha and beta chains form an alternating ring which encloses part of the gamma chain. F(1) is attached to F(0) by a central stalk formed by the gamma and epsilon chains, while a peripheral stalk is formed by the delta and b chains.

The protein resides in the cell membrane. F(1)F(0) ATP synthase produces ATP from ADP in the presence of a proton or sodium gradient. F-type ATPases consist of two structural domains, F(1) containing the extramembraneous catalytic core and F(0) containing the membrane proton channel, linked together by a central stalk and a peripheral stalk. During catalysis, ATP synthesis in the catalytic domain of F(1) is coupled via a rotary mechanism of the central stalk subunits to proton translocation. In terms of biological role, this protein is part of the stalk that links CF(0) to CF(1). It either transmits conformational changes from CF(0) to CF(1) or is implicated in proton conduction. The sequence is that of ATP synthase subunit delta from Tropheryma whipplei (strain TW08/27) (Whipple's bacillus).